We begin with the raw amino-acid sequence, 247 residues long: Caffeoyl-CoA O-methyltransferase 2 (247 aa).

Residue lysine 21 coordinates substrate. S-adenosyl-L-methionine contacts are provided by residues threonine 63, glutamate 85, 87–88 (GV), serine 93, aspartate 111, and alanine 140. Aspartate 163 provides a ligand contact to substrate. An a divalent metal cation-binding site is contributed by aspartate 163. S-adenosyl-L-methionine is bound at residue aspartate 165. Residues aspartate 189 and asparagine 190 each contribute to the a divalent metal cation site. A substrate-binding site is contributed by asparagine 194.

This sequence belongs to the class I-like SAM-binding methyltransferase superfamily. Cation-dependent O-methyltransferase family. CCoAMT subfamily. It depends on a divalent metal cation as a cofactor.

The catalysed reaction is (E)-caffeoyl-CoA + S-adenosyl-L-methionine = (E)-feruloyl-CoA + S-adenosyl-L-homocysteine + H(+). The protein operates within aromatic compound metabolism; phenylpropanoid biosynthesis. Functionally, methylates caffeoyl-CoA to feruloyl-CoA and 5-hydroxyferuloyl-CoA to sinapoyl-CoA. Plays a role in the synthesis of feruloylated polysaccharides. Involved in the reinforcement of the plant cell wall. Also involved in the responding to wounding or pathogen challenge by the increased formation of cell wall-bound ferulic acid polymers. The polypeptide is Caffeoyl-CoA O-methyltransferase 2 (CCOAOMT2) (Populus trichocarpa (Western balsam poplar)).